A 198-amino-acid polypeptide reads, in one-letter code: Cyclin-dependent kinase inhibitor 1B (198 aa).

The span at 1 to 12 shows a compositional bias: polar residues; it reads MSNVRVSNGSPT. A disordered region spans residues 1–30; sequence MSNVRVSNGSPTSERRDAKQAEYPKPSACR. Ser-10 is subject to Phosphoserine; by UHMK1. The span at 13–22 shows a compositional bias: basic and acidic residues; the sequence is SERRDAKQAE. Positions 51-91 are interaction with CDK2; sequence DMEEASQNKWNFDFQNHKPLEGKYEWQEVEKGSLPEFYYRP. The residue at position 74 (Tyr-74) is a Phosphotyrosine; by SRC. The segment at 87-198 is disordered; sequence FYYRPPRPPK…KKPGLRRRQT (112 aa). Tyr-88 carries the post-translational modification Phosphotyrosine; by ABL, LYN and SRC. Tyr-89 carries the post-translational modification Phosphotyrosine. Residues 104 to 113 are compositionally biased toward polar residues; that stretch reads QESQDVSGTR. Over residues 126 to 137 the composition is skewed to basic and acidic residues; it reads EDTHLVDQKTDA. A Nuclear localization signal motif is present at residues 153 to 169; sequence KRPATDDSSPQNKRANR. Residue Thr-157 is modified to Phosphothreonine; by CaMK1, PKB/AKT1 and PIM1. The residue at position 170 (Thr-170) is a Phosphothreonine. Over residues 175-186 the composition is skewed to polar residues; it reads SDGSPNAGSVEQ. Thr-187 bears the Phosphothreonine; by PKB/AKT1, CDK1 and CDK2 mark. Thr-198 is subject to Phosphothreonine; by CaMK1, PKB/AKT1, RPS6KA1, RPS6KA3 and PIM1.

It belongs to the CDI family. As to quaternary structure, forms a ternary complex composed of CCNE1, CDK2 and CDKN1B. Interacts directly with CCNE1; the interaction is inhibited by CDK2-dependent phosphorylation on Thr-187. Interacts with COPS5, subunit of the COP9 signalosome complex; the interaction leads to CDKN1B degradation. Interacts with NUP50; the interaction leads to nuclear import and degradation of phosphorylated CDKN1B. Interacts with CCND1 and SNX6. Interacts (Thr-198-phosphorylated form) with 14-3-3 proteins, binds strongly YWHAQ, weakly YWHAE and YWHAH, but not YWHAB nor YWHAZ; the interaction with YWHAQ results in translocation to the cytoplasm. Interacts with AKT1 and LYN; the interactions lead to cytoplasmic mislocation, phosphorylation of CDKN1B and inhibition of cell cycle arrest. Forms a ternary complex with CCNA2 and CDK2; CDKN1B inhibits the kinase activity of CDK2 through conformational rearrangements. Interacts (unphosphorylated form) with CDK2. Forms a complex with CDK2 and SPDYA, but does not directly interact with SPDYA. Forms a ternary complex composed of cyclin D, CDK4 and CDKN1B. Interacts (phosphorylated on Tyr-88 and Tyr-89) with CDK4; the interaction is required for cyclin D and CDK4 complex assembly, induces nuclear translocation and activates the CDK4 kinase activity. Interacts with GRB2. Interacts with PIM1. Identified in a complex with SKP1, SKP2 and CKS1B. Interacts with UHMK1; the interaction leads to cytoplasmic mislocation, phosphorylation of CDKN1B and inhibition of cell cycle arrest. Also interacts with CDK1. Dephosphorylated on Thr-187 by PPM1H, leading to CDKN1B stability. In terms of processing, phosphorylated; phosphorylation occurs on serine, threonine and tyrosine residues. Phosphorylation on Ser-10 is the major site of phosphorylation in resting cells, takes place at the G(0)-G(1) phase and leads to protein stability. Phosphorylation on other sites is greatly enhanced by mitogens, growth factors, cMYC and in certain cancer cell lines. The phosphorylated form found in the cytoplasm is inactivate. Phosphorylation on Thr-198 is required for interaction with 14-3-3 proteins. Phosphorylation on Thr-187, by CDK1 and CDK2 leads to protein ubiquitination and proteasomal degradation. Tyrosine phosphorylation promotes this process. Phosphorylation by PKB/AKT1 can be suppressed by LY294002, an inhibitor of the catalytic subunit of PI3K. Phosphorylation on Tyr-88 and Tyr-89 has no effect on binding CDK2, but is required for binding CDK4. Dephosphorylated on tyrosine residues by G-CSF. Dephosphorylated on Thr-187 by PPM1H, leading to CDKN1B stability. Post-translationally, ubiquitinated; in the cytoplasm by the KPC complex (composed of RNF123/KPC1 and UBAC1/KPC2) and, in the nucleus, by SCF(SKP2). The latter requires prior phosphorylation on Thr-187. Ubiquitinated; by a TRIM21-containing SCF(SKP2)-like complex; leads to its degradation. Subject to degradation in the lysosome. Interaction with SNX6 promotes lysosomal degradation.

It is found in the nucleus. It localises to the cytoplasm. The protein resides in the endosome. Important regulator of cell cycle progression. Inhibits the kinase activity of CDK2 bound to cyclin A, but has little inhibitory activity on CDK2 bound to SPDYA. Involved in G1 arrest. Potent inhibitor of cyclin E- and cyclin A-CDK2 complexes. Forms a complex with cyclin type D-CDK4 complexes and is involved in the assembly, stability, and modulation of CCND1-CDK4 complex activation. Acts either as an inhibitor or an activator of cyclin type D-CDK4 complexes depending on its phosphorylation state and/or stoichometry. The polypeptide is Cyclin-dependent kinase inhibitor 1B (CDKN1B) (Canis lupus familiaris (Dog)).